The sequence spans 190 residues: Shikimate kinase (190 aa).

13-18 lines the ATP pocket; that stretch reads GAGKTT. Thr17 provides a ligand contact to Mg(2+). The substrate site is built by Asp35, Arg59, and Gly81. Arg119 serves as a coordination point for ATP. Arg138 is a binding site for substrate.

Belongs to the shikimate kinase family. As to quaternary structure, monomer. The cofactor is Mg(2+).

It localises to the cytoplasm. The catalysed reaction is shikimate + ATP = 3-phosphoshikimate + ADP + H(+). Its pathway is metabolic intermediate biosynthesis; chorismate biosynthesis; chorismate from D-erythrose 4-phosphate and phosphoenolpyruvate: step 5/7. Its function is as follows. Catalyzes the specific phosphorylation of the 3-hydroxyl group of shikimic acid using ATP as a cosubstrate. This is Shikimate kinase from Ralstonia nicotianae (strain ATCC BAA-1114 / GMI1000) (Ralstonia solanacearum).